A 610-amino-acid polypeptide reads, in one-letter code: All-trans-retinol 13,14-reductase (610 aa).

A signal peptide spans 1–18 (MWLPLVLLLAVLLLAVLC).

The protein belongs to the carotenoid/retinoid oxidoreductase family. CrtISO subfamily. Requires NAD(+) as cofactor. The cofactor is NADP(+). FAD is required as a cofactor. As to expression, expressed in liver; expression positively correlates with obesity and liver steatosis. Expressed in adipose tissue; expression tends to be decreased in obese versus lean individuals.

Its subcellular location is the endoplasmic reticulum membrane. It catalyses the reaction all-trans-13,14-dihydroretinol + A = all-trans-retinol + AH2. Catalyzes the saturation of all-trans-retinol to all-trans-13,14-dihydroretinol. Does not exhibit any activity toward all-trans-retinoic acid, nor 9-cis, 11-cis or 13-cis-retinol isomers. May play a role in the metabolism of vitamin A. Independently of retinol conversion, may regulate liver metabolism upstream of MLXIPL/ChREBP. May play a role in adipocyte differentiation. This chain is All-trans-retinol 13,14-reductase (RETSAT), found in Homo sapiens (Human).